The primary structure comprises 43 residues: ALVGPSGMILADGTPVQFPAHAKPVLTGPSGIVFSNGQNIQLH.

Tandem repeats lie at residues 1–18 (ALVG…PVQF) and 25–42 (VLTG…NIQL).

In terms of tissue distribution, calcified shell.

In Cancer pagurus (Rock crab), this protein is Cuticle protein CP434.